A 390-amino-acid chain; its full sequence is Homoserine O-succinyltransferase (390 aa).

The AB hydrolase-1 domain maps to Asn56 to Leu365. Ser162 functions as the Nucleophile in the catalytic mechanism. Arg232 provides a ligand contact to substrate. Active-site residues include Asp327 and His360. Substrate is bound at residue Asp361.

Belongs to the AB hydrolase superfamily. MetX family. In terms of assembly, homodimer.

It is found in the cytoplasm. It catalyses the reaction L-homoserine + succinyl-CoA = O-succinyl-L-homoserine + CoA. The protein operates within amino-acid biosynthesis; L-methionine biosynthesis via de novo pathway; O-succinyl-L-homoserine from L-homoserine: step 1/1. Transfers a succinyl group from succinyl-CoA to L-homoserine, forming succinyl-L-homoserine. In vitro, also has serine succinyl transferase activity. The protein is Homoserine O-succinyltransferase of Litchfieldella anticariensis (strain DSM 16096 / CECT 5854 / CIP 108499 / LMG 22089 / FP35) (Halomonas anticariensis).